Reading from the N-terminus, the 391-residue chain is 1-deoxy-D-xylulose 5-phosphate reductoisomerase (391 aa).

NADPH-binding residues include T11, G12, S13, I14, G37, N39, and N125. Position 126 (K126) interacts with 1-deoxy-D-xylulose 5-phosphate. E127 contributes to the NADPH binding site. Mn(2+) is bound at residue D151. 1-deoxy-D-xylulose 5-phosphate is bound by residues S152, E153, S176, and H199. E153 lines the Mn(2+) pocket. G205 provides a ligand contact to NADPH. Positions 212, 217, 218, and 221 each coordinate 1-deoxy-D-xylulose 5-phosphate. E221 contributes to the Mn(2+) binding site.

The protein belongs to the DXR family. It depends on Mg(2+) as a cofactor. The cofactor is Mn(2+).

The enzyme catalyses 2-C-methyl-D-erythritol 4-phosphate + NADP(+) = 1-deoxy-D-xylulose 5-phosphate + NADPH + H(+). It participates in isoprenoid biosynthesis; isopentenyl diphosphate biosynthesis via DXP pathway; isopentenyl diphosphate from 1-deoxy-D-xylulose 5-phosphate: step 1/6. Functionally, catalyzes the NADPH-dependent rearrangement and reduction of 1-deoxy-D-xylulose-5-phosphate (DXP) to 2-C-methyl-D-erythritol 4-phosphate (MEP). The polypeptide is 1-deoxy-D-xylulose 5-phosphate reductoisomerase (Heliobacterium modesticaldum (strain ATCC 51547 / Ice1)).